The sequence spans 328 residues: MNMSDQRIPQNTGDNSNNSNSNNNNNNNNNTHTISNLSAGLKSVSLTDQQQNEVNLNLLQQQLHRESSNQQQQSRITQFFQNQPAEGYTLFSHRSAPNGFKVAIILSELNLPFNTIFLDFNNGEQRAPEFVTINPNARVPALIDHFNENTSIWESGAIILYLVSKYLKENGECSLWSDNLIEQSQISSWLFFQTSGHAPMIGQALHFRYFHSCPVPSAVERYTDEVRRVYGVVEMALAERREALIMDLDVENAAAYSAGTTPLSQSRYFDYPVWLVGDRATVADLSFVPWNNVVDRIGINLKVEFPEVYKWTKYMMRRPAVIRALRGD.

Over residues M1–D14 the composition is skewed to polar residues. Positions M1–S35 are disordered. The span at N15–N30 shows a compositional bias: low complexity. A GST N-terminal domain is found at E86–N170. One can recognise a GST C-terminal domain in the interval N179–D328.

The protein belongs to the GST superfamily. In terms of assembly, homodimer.

Functionally, plays an important role in the cellular response to the nitrogen source. URE2 gene plays a major part in the repression of GLN1 and GDH2 genes by glutamine, and is required for the inactivation of glutamine synthetase. URE2 gene product may catalytically inactivate GLN3 in response to an increase in the intracellular concentration of glutamine. This is Protein URE2 (URE2) from Candida maltosa (Yeast).